A 490-amino-acid chain; its full sequence is (21S)-21-acetyl-1-hydroxy-apo-melianone synthase CYP88A164 (490 aa).

Residues D4–L24 form a helical membrane-spanning segment. C438 contributes to the heme binding site.

Belongs to the cytochrome P450 family. The cofactor is heme. In terms of tissue distribution, mainly expressed in petioles and, to a lower extent, in roots.

It is found in the membrane. It carries out the reaction (21S)-21-acetoxyl-apo-melianone + reduced [NADPH--hemoprotein reductase] + O2 = (21S)-21-acetyl-1-hydroxy-apo-melianone + oxidized [NADPH--hemoprotein reductase] + H2O + H(+). Its pathway is secondary metabolite biosynthesis; terpenoid biosynthesis. Functionally, monooxygenase involved in the biosynthesis of limonoids triterpene natural products such as azadirachtin, an antifeedant widely used as bioinsecticide, and possessing many medicinal applications including anti-tumoral, anti-malarial, anti-rheumatic, antibacterial, anti-inflammatory, anti-pyretic and diuretic effects. Catalyzes the conversion of (21S)-21-acetoxyl-apo-melianone to (21S)-21-acetyl-1-hydroxy-apo-melianone. The sequence is that of (21S)-21-acetyl-1-hydroxy-apo-melianone synthase CYP88A164 from Melia azedarach (Chinaberry tree).